The following is an 85-amino-acid chain: MYYLLFMLKIRLARFGRKKRPYYKIVVANSSSPRDGKFLEQVGSYDPLLSKDDPLRVCLDIERIRYWTSVGAKPTERVAKFVACL.

It belongs to the bacterial ribosomal protein bS16 family.

The protein is Small ribosomal subunit protein bS16 of Neorickettsia sennetsu (strain ATCC VR-367 / Miyayama) (Ehrlichia sennetsu).